The sequence spans 319 residues: tRNA dimethylallyltransferase (319 aa).

9–16 (GPTAVGKS) serves as a coordination point for ATP. 11-16 (TAVGKS) is a substrate binding site. Residues 39–42 (DSMQ) form an interaction with substrate tRNA region.

It belongs to the IPP transferase family. As to quaternary structure, monomer. Mg(2+) serves as cofactor.

The enzyme catalyses adenosine(37) in tRNA + dimethylallyl diphosphate = N(6)-dimethylallyladenosine(37) in tRNA + diphosphate. In terms of biological role, catalyzes the transfer of a dimethylallyl group onto the adenine at position 37 in tRNAs that read codons beginning with uridine, leading to the formation of N6-(dimethylallyl)adenosine (i(6)A). The chain is tRNA dimethylallyltransferase from Thermobifida fusca (strain YX).